The primary structure comprises 193 residues: Spermatogenesis-associated protein 3 (193 aa).

Residues 1-16 show a composition bias toward basic residues; the sequence is MKKVKKKKSDSRRRRN. Residues 1–92 are disordered; that stretch reads MKKVKKKKSD…SPFLVPMEPK (92 aa). A compositionally biased stretch (low complexity) spans 17 to 35; it reads SISPQTSSDSSQQPSSETP. Positions 36 to 48 are enriched in pro residues; it reads PSCPEPASPPSKP.

Strongly expressed in testis. Faintly expressed in epididymis, ovary, spleen, kidney, lung, heart, brain, epididymis, liver and skeletal muscle.

It localises to the cell projection. The protein localises to the cilium. It is found in the flagellum. The sequence is that of Spermatogenesis-associated protein 3 (Spata3) from Mus musculus (Mouse).